Reading from the N-terminus, the 164-residue chain is Lipoprotein signal peptidase (164 aa).

Transmembrane regions (helical) follow at residues 12 to 32 (WLWL…LILQ), 70 to 90 (WFFA…MYRS), and 102 to 122 (ALII…GFVV). Catalysis depends on residues Asp-123 and Asp-141. The helical transmembrane segment at 137–157 (FNLADTAICVGAALIVLEGFL) threads the bilayer.

It belongs to the peptidase A8 family.

The protein localises to the cell inner membrane. It catalyses the reaction Release of signal peptides from bacterial membrane prolipoproteins. Hydrolyzes -Xaa-Yaa-Zaa-|-(S,diacylglyceryl)Cys-, in which Xaa is hydrophobic (preferably Leu), and Yaa (Ala or Ser) and Zaa (Gly or Ala) have small, neutral side chains.. It functions in the pathway protein modification; lipoprotein biosynthesis (signal peptide cleavage). In terms of biological role, this protein specifically catalyzes the removal of signal peptides from prolipoproteins. The polypeptide is Lipoprotein signal peptidase (Shigella sonnei (strain Ss046)).